A 348-amino-acid polypeptide reads, in one-letter code: Dihydroorotase (348 aa).

Histidine 14 and histidine 16 together coordinate Zn(2+). Substrate-binding positions include 16 to 18 (HLR) and asparagine 42. Residues lysine 100, histidine 137, and histidine 175 each coordinate Zn(2+). Lysine 100 is subject to N6-carboxylysine. Histidine 137 is a binding site for substrate. Leucine 220 lines the substrate pocket. Residue aspartate 248 participates in Zn(2+) binding. The active site involves aspartate 248. Residues histidine 252 and alanine 264 each coordinate substrate.

This sequence belongs to the metallo-dependent hydrolases superfamily. DHOase family. Class II DHOase subfamily. In terms of assembly, homodimer. The cofactor is Zn(2+).

It catalyses the reaction (S)-dihydroorotate + H2O = N-carbamoyl-L-aspartate + H(+). Its pathway is pyrimidine metabolism; UMP biosynthesis via de novo pathway; (S)-dihydroorotate from bicarbonate: step 3/3. Its function is as follows. Catalyzes the reversible cyclization of carbamoyl aspartate to dihydroorotate. The chain is Dihydroorotase from Pseudomonas aeruginosa (strain UCBPP-PA14).